The chain runs to 351 residues: Small ribosomal subunit biogenesis GTPase RsgA (351 aa).

A CP-type G domain is found at 107 to 277; the sequence is ENLLQRPDNF…LIDSPGIREF (171 aa). Residues 163-166 and 219-227 each bind GTP; these read NKTD and GQSGVGKSS. Cys301, Cys306, His308, and Cys314 together coordinate Zn(2+).

This sequence belongs to the TRAFAC class YlqF/YawG GTPase family. RsgA subfamily. As to quaternary structure, monomer. Associates with 30S ribosomal subunit, binds 16S rRNA. The cofactor is Zn(2+).

Its subcellular location is the cytoplasm. In terms of biological role, one of several proteins that assist in the late maturation steps of the functional core of the 30S ribosomal subunit. Helps release RbfA from mature subunits. May play a role in the assembly of ribosomal proteins into the subunit. Circularly permuted GTPase that catalyzes slow GTP hydrolysis, GTPase activity is stimulated by the 30S ribosomal subunit. This chain is Small ribosomal subunit biogenesis GTPase RsgA, found in Marinobacter nauticus (strain ATCC 700491 / DSM 11845 / VT8) (Marinobacter aquaeolei).